The primary structure comprises 90 residues: Probable Fe(2+)-trafficking protein (90 aa).

It belongs to the Fe(2+)-trafficking protein family.

Could be a mediator in iron transactions between iron acquisition and iron-requiring processes, such as synthesis and/or repair of Fe-S clusters in biosynthetic enzymes. The polypeptide is Probable Fe(2+)-trafficking protein (Paraburkholderia xenovorans (strain LB400)).